Reading from the N-terminus, the 335-residue chain is Zinc-type alcohol dehydrogenase-like protein SAS2087 (335 aa).

Belongs to the zinc-containing alcohol dehydrogenase family. Quinone oxidoreductase subfamily.

This is Zinc-type alcohol dehydrogenase-like protein SAS2087 from Staphylococcus aureus (strain MSSA476).